Here is a 373-residue protein sequence, read N- to C-terminus: Leucine aminopeptidase 1 (373 aa).

Positions 1-18 are cleaved as a signal peptide; that stretch reads MKFISVLALGATATSVLG. Zn(2+)-binding residues include His-176 and Asp-195. Asn-196 carries N-linked (GlcNAc...) asparagine glycosylation. Residues Glu-234 and Asp-261 each coordinate Zn(2+). An N-linked (GlcNAc...) asparagine glycan is attached at Asn-286. Cysteines 310 and 314 form a disulfide. His-343 is a Zn(2+) binding site.

This sequence belongs to the peptidase M28 family. M28E subfamily. As to quaternary structure, monomer. The cofactor is Zn(2+).

The protein resides in the secreted. Functionally, extracellular aminopeptidase which contributes to pathogenicity. This is Leucine aminopeptidase 1 (LAP1) from Arthroderma otae (strain ATCC MYA-4605 / CBS 113480) (Microsporum canis).